A 474-amino-acid chain; its full sequence is Melanopsin (474 aa).

Residues 1-72 (MNSPSESRVP…VDVPDHAHYT (72 aa)) are Extracellular-facing. Asn-31 and Asn-35 each carry an N-linked (GlcNAc...) asparagine glycan. A helical transmembrane segment spans residues 73 to 93 (LGTVILLVGLTGMLGNLTVIY). At 94–107 (TFCRNRGLRTPANM) the chain is on the cytoplasmic side. Residues 108 to 128 (LIINLAVSDFLMSFTQAPVFF) traverse the membrane as a helical segment. The Extracellular segment spans residues 129–144 (ASSLYKKWLFGETGCK). Cys-143 and Cys-221 are disulfide-bonded. The helical transmembrane segment at 145–165 (FYAFCGAVFGIVSMITLTAIA) threads the bilayer. At 166-188 (MDRYLVITRPLATIGMRSKRRTA) the chain is on the cytoplasmic side. The helical transmembrane segment at 189–209 (LVLLGVWLYALAWSLPPFFGW) threads the bilayer. Topologically, residues 210 to 238 (SAYVPEGLLTSCSWDYVTFTPLVRAYTML) are extracellular. The chain crosses the membrane as a helical span at residues 239–259 (LFCFVFFLPLLIIIFCYIFIF). The Cytoplasmic segment spans residues 260-293 (RAIRETGRACEGCGESPLRRRQWQRLQSEWKMAK). Residues 294 to 314 (VALIVILLFVLSWAPYSTVAL) form a helical membrane-spanning segment. Residues 315 to 355 (VGFAGYSHILTPYMSSVPAVIAKASAIHNPIIYAITHPKYR) are Extracellular-facing. The residue at position 337 (Lys-337) is an N6-(retinylidene)lysine. A helical membrane pass occupies residues 356-372 (AAIAQHLPCLGVLLGVS). At 373–474 (GQRSHPSLSY…RHLPSLDRRM (102 aa)) the chain is on the cytoplasmic side. The interval 428 to 474 (AAQQASGQSFCSHDLEDGEVKAPSSPQEQKSKTPKTKRHLPSLDRRM) is disordered.

Belongs to the G-protein coupled receptor 1 family. Opsin subfamily. As to expression, eye; expressed in a photosensitive subset of retinal ganglion cells (at protein level).

The protein localises to the cell membrane. It localises to the cell projection. It is found in the axon. Its subcellular location is the dendrite. The protein resides in the perikaryon. Its function is as follows. Photoreceptor that binds cis-retinaldehydes. Contributes to pupillar reflex, photoentrainment and other non-image forming responses to light. May be involved in the optokinetic visual tracking response. May be involved in the regulation of retinal hyaloid vessel growth and regression. The polypeptide is Melanopsin (Rattus norvegicus (Rat)).